The chain runs to 309 residues: Mitochondrial import receptor subunit TOM34 (309 aa).

TPR repeat units follow at residues 9–42 (VEEL…LQAQ), 51–84 (SVLY…VPFS), and 86–118 (KPLL…DDSV). Serine 160 carries the phosphoserine modification. A disordered region spans residues 161-189 (LPSENHKEMAKSKSKETTATKNRVPSAGD). Basic and acidic residues predominate over residues 164-178 (ENHKEMAKSKSKETT). At serine 186 the chain carries Phosphoserine. TPR repeat units lie at residues 193-226 (AKVL…SNLE), 227-260 (SATY…DGKN), and 262-294 (KAFY…EPRN). A Glycyl lysine isopeptide (Lys-Gly) (interchain with G-Cter in SUMO2) cross-link involves residue lysine 197.

Belongs to the Tom34 family. In terms of assembly, interacts with HSP90A, VCP, ATP6V1D, KIAA0665, AMPK, and DMAP1 through its TPR repeat.

It localises to the cytoplasm. The protein localises to the mitochondrion outer membrane. Its function is as follows. Plays a role in the import of cytosolically synthesized preproteins into mitochondria. Binds the mature portion of precursor proteins. Interacts with cellular components, and possesses weak ATPase activity. May be a chaperone-like protein that helps to keep newly synthesized precursors in an unfolded import compatible state. The sequence is that of Mitochondrial import receptor subunit TOM34 (TOMM34) from Pongo abelii (Sumatran orangutan).